Consider the following 376-residue polypeptide: uncharacterized protein (376 aa).

Residues 1–22 form the signal peptide; sequence MVATGRIIITLLAAALDEIILA.

This sequence belongs to the ascovirus HvAV ORF17 family.

This is an uncharacterized protein from Heliothis virescens ascovirus 3e (HvAV-3e).